A 722-amino-acid polypeptide reads, in one-letter code: MAR-binding filament-like protein 1-1 (722 aa).

The tract at residues 1–20 (MGSSCFPQSPLSHSLFSSSS) is disordered. Residues 1 to 50 (MGSSCFPQSPLSHSLFSSSSLSSSQFTPLLFSPRNAQKCKKKMPAMACIH) constitute a chloroplast transit peptide. Residues 51–84 (SENQKESEFCSRRTILFVGFSVLPLLSLRANAFE) constitute a thylakoid transit peptide. Residues 85–112 (GLSVDSQVKAQPQKEETEQTIQGNAENP) lie on the Lumenal, thylakoid side of the membrane. Residues 113-133 (FFSLLNGLGVFGSGVLGSLYA) form a helical membrane-spanning segment. Over 134–722 (LARNEKAVSD…TQPASQQESS (589 aa)) the chain is Stromal. Positions 146–679 (IESMKNKLKE…KGEILRLRTQ (534 aa)) form a coiled coil. The disordered stretch occupies residues 687 to 722 (VNNEEKVEAGEKAAVTVKRTRRRKTATQPASQQESS). The Nuclear localization signal signature appears at 705-712 (RTRRRKTA).

As to quaternary structure, interacts with PTST2; the interaction is essential for the initiation of starch granules biosynthesis in leaf chloroplasts, for the correct location of the process in the stromal spaces between the thylakoid membranes, and for the association of PTST2 with the thylakoid membranes. Post-translationally, predicted to be translocated into the thylakoid by the Tat system.

It localises to the plastid. The protein localises to the chloroplast. Its subcellular location is the chloroplast thylakoid membrane. It is found in the chloroplast stroma. The protein resides in the chloroplast nucleoid. It localises to the nucleus. The protein localises to the nucleus matrix. In terms of biological role, required for the initiation of starch granules biosynthesis in leaf chloroplasts. Anchored to the thylakoid membranes with its C-terminus facing into the stroma where it is essential for localizing PTST2 and SS4 to the stromal spaces between the thylakoid membranes in order to begin starch granule formation. Associated with leaf chloroplastic nucleoids in vivo. Binds to various chloroplastic double-stranded DNA fragments without particular sequence specificity in vitro. May function at the interface between nucleoids and thylakoids possibly by anchoring nucleoids to the thylakoid membrane system in mature chloroplasts. Likely to participate in nuclear architecture by connecting chromatin with the nuclear matrix and potentially with the nuclear envelope. This Nicotiana tabacum (Common tobacco) protein is MAR-binding filament-like protein 1-1.